A 165-amino-acid polypeptide reads, in one-letter code: Coronafacic acid dehydratase (165 aa).

His-62 is a catalytic residue.

This sequence belongs to the thioester dehydratase family.

It functions in the pathway phytotoxin biosynthesis; coronatine biosynthesis. This Pseudomonas savastanoi pv. glycinea (Pseudomonas syringae pv. glycinea) protein is Coronafacic acid dehydratase (cfa2).